A 139-amino-acid polypeptide reads, in one-letter code: D-ribose pyranase (139 aa).

The active-site Proton donor is His-20. Substrate contacts are provided by residues Asp-28, His-106, and 128-130 (YAN).

Belongs to the RbsD / FucU family. RbsD subfamily. As to quaternary structure, homodecamer.

Its subcellular location is the cytoplasm. It catalyses the reaction beta-D-ribopyranose = beta-D-ribofuranose. Its pathway is carbohydrate metabolism; D-ribose degradation; D-ribose 5-phosphate from beta-D-ribopyranose: step 1/2. Its function is as follows. Catalyzes the interconversion of beta-pyran and beta-furan forms of D-ribose. The protein is D-ribose pyranase of Glaesserella parasuis serovar 5 (strain SH0165) (Haemophilus parasuis).